We begin with the raw amino-acid sequence, 257 residues long: tRNA uridine(34) hydroxylase (257 aa).

One can recognise a Rhodanese domain in the interval 128–222; it reads NGRRLVMLDA…YFEQVGGEGY (95 aa). The active-site Cysteine persulfide intermediate is Cys-182.

Belongs to the TrhO family.

The enzyme catalyses uridine(34) in tRNA + AH2 + O2 = 5-hydroxyuridine(34) in tRNA + A + H2O. Catalyzes oxygen-dependent 5-hydroxyuridine (ho5U) modification at position 34 in tRNAs. This Xylella fastidiosa (strain M23) protein is tRNA uridine(34) hydroxylase.